Consider the following 606-residue polypeptide: Elongation factor 4 (606 aa).

The 183-residue stretch at 7 to 189 (SRIRNFCIIA…AVVDRVPPPK (183 aa)) folds into the tr-type G domain. GTP-binding positions include 19-24 (DHGKST) and 136-139 (NKID).

It belongs to the TRAFAC class translation factor GTPase superfamily. Classic translation factor GTPase family. LepA subfamily.

The protein resides in the cell inner membrane. It catalyses the reaction GTP + H2O = GDP + phosphate + H(+). Required for accurate and efficient protein synthesis under certain stress conditions. May act as a fidelity factor of the translation reaction, by catalyzing a one-codon backward translocation of tRNAs on improperly translocated ribosomes. Back-translocation proceeds from a post-translocation (POST) complex to a pre-translocation (PRE) complex, thus giving elongation factor G a second chance to translocate the tRNAs correctly. Binds to ribosomes in a GTP-dependent manner. This is Elongation factor 4 from Synechococcus sp. (strain CC9605).